A 200-amino-acid chain; its full sequence is 3-isopropylmalate dehydratase small subunit (200 aa).

The protein belongs to the LeuD family. LeuD type 1 subfamily. In terms of assembly, heterodimer of LeuC and LeuD.

The enzyme catalyses (2R,3S)-3-isopropylmalate = (2S)-2-isopropylmalate. It participates in amino-acid biosynthesis; L-leucine biosynthesis; L-leucine from 3-methyl-2-oxobutanoate: step 2/4. Functionally, catalyzes the isomerization between 2-isopropylmalate and 3-isopropylmalate, via the formation of 2-isopropylmaleate. This is 3-isopropylmalate dehydratase small subunit (leuD) from Haemophilus influenzae (strain ATCC 51907 / DSM 11121 / KW20 / Rd).